The following is a 227-amino-acid chain: 7-cyano-7-deazaguanine synthase (227 aa).

8–18 (VSGGADSATVL) provides a ligand contact to ATP. Zn(2+) is bound by residues cysteine 192, cysteine 202, cysteine 205, and cysteine 208.

Belongs to the QueC family. Zn(2+) is required as a cofactor.

It catalyses the reaction 7-carboxy-7-deazaguanine + NH4(+) + ATP = 7-cyano-7-deazaguanine + ADP + phosphate + H2O + H(+). It functions in the pathway purine metabolism; 7-cyano-7-deazaguanine biosynthesis. Functionally, catalyzes the ATP-dependent conversion of 7-carboxy-7-deazaguanine (CDG) to 7-cyano-7-deazaguanine (preQ(0)). This Rickettsia akari (strain Hartford) protein is 7-cyano-7-deazaguanine synthase.